Consider the following 96-residue polypeptide: Large ribosomal subunit protein bL27 (96 aa).

A propeptide spanning residues 1 to 9 (MLRLDLQFF) is cleaved from the precursor.

Belongs to the bacterial ribosomal protein bL27 family. The N-terminus is cleaved by ribosomal processing cysteine protease Prp.

This chain is Large ribosomal subunit protein bL27, found in Geobacillus kaustophilus (strain HTA426).